The following is an 875-amino-acid chain: Protein HIR2 (875 aa).

WD repeat units follow at residues 10–47 (IHNE…DTAF), 118–158 (KSPS…KLSE), 163–201 (KASK…THKL), 237–277 (PNNA…PAFY), 278–316 (EKPN…PLFN), and 320–359 (VSST…LGVA). Residues 398–473 (ESASAAPIPN…IAPGSKKQKK (76 aa)) are disordered. A compositionally biased stretch (polar residues) spans 424-446 (ANNQTNGIKTIQSTSMEFNTPSY). 2 WD repeats span residues 546-587 (LFQD…LMAP) and 589-626 (VLGV…LAFP). The residue at position 713 (Ser713) is a Phosphoserine.

This sequence belongs to the WD repeat HIR1 family. Component of the HIR complex, composed of HIR1, HIR2, HIR3 and HPC2. This complex may consist of one copy of HIR1 and HIR3 and two copies of HIR2 and HPC2. The HIR complex interacts with ASF1. Interacts with SNF2. Interacts with SNF5. Interacts with SWI3. Interacts with RTT106.

Its subcellular location is the nucleus. It localises to the chromosome. Functionally, component of the HIR complex, which cooperates with ASF1 to promote replication-independent chromatin assembly. The HIR complex is also required for the periodic repression of three of the four histone gene loci during the cell cycle as well as for autogenous regulation of the HTA1-HTB1 locus by H2A and H2B. DNA-binding by the HIR complex may repress transcription by inhibiting nucleosome remodeling by the SWI/SNF complex. The HIR complex may also be required for transcriptional silencing of centromeric, telomeric and mating-type loci in the absence of CAF-1. The protein is Protein HIR2 (HIR2) of Saccharomyces cerevisiae (strain ATCC 204508 / S288c) (Baker's yeast).